Consider the following 466-residue polypeptide: Ras-GEF domain-containing family member 1C (466 aa).

The interval 1–37 is disordered; it reads MPQTLSASDMVTPGSLSPPPTEPTDGEQAGQPLLDGA. Residues 34–164 form the N-terminal Ras-GEF domain; that stretch reads LDGAPSSASL…LLQALHQKLA (131 aa). Residues 200 to 446 enclose the Ras-GEF domain; it reads DPYTLAQQLT…YLASYESESP (247 aa).

Guanine nucleotide exchange factor (GEF). The protein is Ras-GEF domain-containing family member 1C (RASGEF1C) of Homo sapiens (Human).